Reading from the N-terminus, the 468-residue chain is Squamosa promoter-binding-like protein 5 (468 aa).

An SBP-type zinc finger spans residues 204 to 281 (PPRCQAEGCK…TEHNRRRRKP (78 aa)). Zn(2+) contacts are provided by Cys207, Cys212, Cys229, His232, Cys248, Cys251, His255, and Cys267. A Bipartite nuclear localization signal motif is present at residues 264–280 (KRSCRKRLTEHNRRRRK). Disordered regions lie at residues 270-305 (RLTE…DASI), 354-374 (TLSL…DGGL), and 405-458 (HHHL…SNNN). The segment covering 363 to 372 (QEEDDEDEDG) has biased composition (acidic residues). Residues 438 to 458 (NNNNILSCSSASDQQNSSNNN) show a composition bias toward low complexity.

As to expression, ubiquitous.

It is found in the nucleus. In terms of biological role, trans-acting factor that binds specifically to the consensus nucleotide sequence 5'-TNCGTACAA-3'. This is Squamosa promoter-binding-like protein 5 (SPL5) from Oryza sativa subsp. japonica (Rice).